The primary structure comprises 335 residues: Ketol-acid reductoisomerase (NADP(+)) (335 aa).

The KARI N-terminal Rossmann domain maps to 5 to 185 (SKIYTDKDSN…GATRAGVIPT (181 aa)). NADP(+) contacts are provided by residues 28–31 (YGSQ), Ser-56, and 86–89 (DMVQ). His-111 is a catalytic residue. Residue Gly-137 participates in NADP(+) binding. Residues 186–331 (TFKEETETDL…NQLKDLIQKG (146 aa)) enclose the KARI C-terminal knotted domain. Residues Asp-194, Glu-198, Glu-230, and Glu-234 each contribute to the Mg(2+) site. Residue Ser-255 participates in substrate binding.

It belongs to the ketol-acid reductoisomerase family. The cofactor is Mg(2+).

The enzyme catalyses (2R)-2,3-dihydroxy-3-methylbutanoate + NADP(+) = (2S)-2-acetolactate + NADPH + H(+). It catalyses the reaction (2R,3R)-2,3-dihydroxy-3-methylpentanoate + NADP(+) = (S)-2-ethyl-2-hydroxy-3-oxobutanoate + NADPH + H(+). It participates in amino-acid biosynthesis; L-isoleucine biosynthesis; L-isoleucine from 2-oxobutanoate: step 2/4. The protein operates within amino-acid biosynthesis; L-valine biosynthesis; L-valine from pyruvate: step 2/4. Functionally, involved in the biosynthesis of branched-chain amino acids (BCAA). Catalyzes an alkyl-migration followed by a ketol-acid reduction of (S)-2-acetolactate (S2AL) to yield (R)-2,3-dihydroxy-isovalerate. In the isomerase reaction, S2AL is rearranged via a Mg-dependent methyl migration to produce 3-hydroxy-3-methyl-2-ketobutyrate (HMKB). In the reductase reaction, this 2-ketoacid undergoes a metal-dependent reduction by NADPH to yield (R)-2,3-dihydroxy-isovalerate. This chain is Ketol-acid reductoisomerase (NADP(+)), found in Saccharolobus islandicus (strain M.16.27) (Sulfolobus islandicus).